Consider the following 231-residue polypeptide: ATP-dependent dethiobiotin synthetase BioD 2 (231 aa).

An ATP-binding site is contributed by 13 to 18; sequence SVGKTV. T17 contacts Mg(2+). K38 is an active-site residue. Residues D55, 112–115, 172–173, 201–203, and Q208 each bind ATP; these read EGTG, NR, and PYL. D55 and E112 together coordinate Mg(2+).

The protein belongs to the dethiobiotin synthetase family. In terms of assembly, homodimer. Requires Mg(2+) as cofactor.

It localises to the cytoplasm. The enzyme catalyses (7R,8S)-7,8-diammoniononanoate + CO2 + ATP = (4R,5S)-dethiobiotin + ADP + phosphate + 3 H(+). Its pathway is cofactor biosynthesis; biotin biosynthesis; biotin from 7,8-diaminononanoate: step 1/2. Catalyzes a mechanistically unusual reaction, the ATP-dependent insertion of CO2 between the N7 and N8 nitrogen atoms of 7,8-diaminopelargonic acid (DAPA, also called 7,8-diammoniononanoate) to form a ureido ring. The sequence is that of ATP-dependent dethiobiotin synthetase BioD 2 from Salmonella typhimurium (strain LT2 / SGSC1412 / ATCC 700720).